Here is a 301-residue protein sequence, read N- to C-terminus: MKVGVIMGGISSEREISLKSGKSIVDSINKNKYEVVSIVIDEKEDIINKVKGIDFALLALHGQFGEDGTVQSVLQTLGIPYSGCGPLSSSMCMDKDISKCILKAANIRTAPWINLRKNDAINYEEIEKMGYPVVVKPTHGGSSVATFIIKEEKDIKDAVIEGFKWDSEVIIEKFIKGDEITCPVFGDKMLPVVAIKPKAEFFDFTAKYADGGSDEFVTELPKKLHEEVEKMALATYKALKCEVYSRVDMIVTEDKVPYILEVNTLPGMTPNSLIPKSAAGVNISFPELIDMIIDESMKVIR.

In terms of domain architecture, ATP-grasp spans Lys99–Asp294. ATP is bound at residue Ile126–Thr181. Positions 248, 261, and 263 each coordinate Mg(2+).

It belongs to the D-alanine--D-alanine ligase family. Requires Mg(2+) as cofactor. The cofactor is Mn(2+).

The protein resides in the cytoplasm. The catalysed reaction is 2 D-alanine + ATP = D-alanyl-D-alanine + ADP + phosphate + H(+). It participates in cell wall biogenesis; peptidoglycan biosynthesis. Its function is as follows. Cell wall formation. This is D-alanine--D-alanine ligase from Clostridium botulinum (strain Alaska E43 / Type E3).